The chain runs to 179 residues: ATP synthase subunit delta (179 aa).

The protein belongs to the ATPase delta chain family. F-type ATPases have 2 components, F(1) - the catalytic core - and F(0) - the membrane proton channel. F(1) has five subunits: alpha(3), beta(3), gamma(1), delta(1), epsilon(1). F(0) has three main subunits: a(1), b(2) and c(10-14). The alpha and beta chains form an alternating ring which encloses part of the gamma chain. F(1) is attached to F(0) by a central stalk formed by the gamma and epsilon chains, while a peripheral stalk is formed by the delta and b chains.

The protein resides in the cell membrane. In terms of biological role, f(1)F(0) ATP synthase produces ATP from ADP in the presence of a proton or sodium gradient. F-type ATPases consist of two structural domains, F(1) containing the extramembraneous catalytic core and F(0) containing the membrane proton channel, linked together by a central stalk and a peripheral stalk. During catalysis, ATP synthesis in the catalytic domain of F(1) is coupled via a rotary mechanism of the central stalk subunits to proton translocation. Functionally, this protein is part of the stalk that links CF(0) to CF(1). It either transmits conformational changes from CF(0) to CF(1) or is implicated in proton conduction. In Clostridium beijerinckii (strain ATCC 51743 / NCIMB 8052) (Clostridium acetobutylicum), this protein is ATP synthase subunit delta.